The chain runs to 965 residues: Collagen alpha-1(I) chain (965 aa).

Pro residues predominate over residues 1 to 21 (SVPGPMGPSGPRGLPGPPGPG). The segment at 1-965 (SVPGPMGPSG…PGPPGPPGPP (965 aa)) is disordered. 4-hydroxyproline is present on residues proline 15, proline 18, proline 20, proline 29, proline 32, proline 35, proline 49, proline 64, proline 70, proline 79, and proline 85. The segment covering 52-66 (NGDDGEAGKPGRPGE) has biased composition (basic and acidic residues). Residue lysine 88 is modified to 5-hydroxylysine; alternate. A glycan (O-linked (Gal...) hydroxylysine; alternate) is linked at lysine 88. A Phosphoserine modification is found at serine 94. Residues 102-118 (DAGPAGPKGEPGSPGEN) show a composition bias toward low complexity. 16 positions are modified to 4-hydroxyproline: proline 112, proline 115, proline 121, proline 130, proline 136, proline 157, proline 166, proline 169, proline 196, proline 199, proline 211, proline 217, proline 226, proline 232, proline 235, and proline 250. Residues 136–154 (PGASGPAGARGNDGATGAA) show a composition bias toward low complexity. Residues 156–168 (PPGPTGPAGPPGF) are compositionally biased toward pro residues. Over residues 202 to 241 (AGAAGPAGNPGADGQPGAKGANGAPGIAGAPGFPGARGPS) the composition is skewed to low complexity. Lysine 253 is modified (5-hydroxylysine). Proline 259, proline 262, proline 273, proline 282, proline 297, proline 303, proline 312, and proline 318 each carry 4-hydroxyproline. Gly residues predominate over residues 307-327 (GERGGPGSRGFPGADGAGPKG). Lysine 326 bears the 5-hydroxylysine mark. A 4-hydroxyproline mark is found at proline 335, proline 344, proline 350, proline 356, proline 365, proline 368, proline 377, proline 386, proline 392, proline 404, proline 413, proline 422, proline 425, proline 443, proline 460, proline 466, proline 472, proline 480, proline 492, proline 501, proline 509, proline 515, and proline 524. Over residues 359 to 385 (KGLTGSPGSPGPDGKTGPPGPAGQDGR) the composition is skewed to low complexity. Positions 394–413 (ARGQAGVMGFPGPKGAAGEP) are enriched in low complexity. A compositionally biased stretch (low complexity) spans 472 to 482 (PGEADLGAPGP). At lysine 536 the chain carries 5-hydroxylysine. Proline 542, proline 557, and proline 563 each carry 4-hydroxyproline. Positions 569 to 583 (SGPSGPAGPTGARGA) are enriched in low complexity. Residue serine 572 is modified to Phosphoserine. A 4-hydroxyproline mark is found at proline 584, proline 590, proline 593, proline 602, proline 608, proline 626, proline 635, and proline 644. The segment covering 596 to 623 (AGFAGPPGADGQPGAKGEPGDAGAKGDA) has biased composition (low complexity). A compositionally biased stretch (pro residues) spans 625-637 (PPGPAGPTGPPGP). Lysine 647 is subject to 5-hydroxylysine. A compositionally biased stretch (low complexity) spans 652–668 (SAGPPGATGFPGAAGRV). 4-hydroxyproline is present on residues proline 656 and proline 662. Residue proline 670 is modified to 3-hydroxyproline. 16 positions are modified to 4-hydroxyproline: proline 671, proline 680, proline 683, proline 704, proline 713, proline 721, proline 730, proline 748, proline 757, proline 760, proline 766, proline 771, proline 777, proline 783, proline 791, and proline 797. Residues 697–706 (ETGPAGRPGE) are compositionally biased toward low complexity. Positions 718–730 (KGSPGADGPAGAP) are enriched in low complexity. Residues 768–780 (KGPPGPMGPPGLA) are compositionally biased toward pro residues. The residue at position 806 (lysine 806) is a 5-hydroxylysine. The span at 815–830 (SGPPGAPGAPGAPGPV) shows a compositional bias: pro residues. 4-hydroxyproline occurs at positions 818, 821, and 824. The segment covering 851–865 (AGPAGARGPAGPQGP) has biased composition (low complexity). The segment covering 866 to 880 (RGDKGETGEQGDRGI) has biased composition (basic and acidic residues). 5-hydroxylysine is present on lysine 869. Residue lysine 881 is modified to 5-hydroxylysine; alternate. Lysine 881 carries O-linked (Gal...) hydroxylysine; alternate glycosylation. 4 positions are modified to 4-hydroxyproline: proline 896, proline 899, proline 917, and proline 932. Low complexity predominate over residues 899-932 (PGEQGPSGASGPAGPRGPPGSAGSPGKDGLNGLP). At proline 937 the chain carries 3-hydroxyproline. Position 938 is a 4-hydroxyproline (proline 938). Residues 950-965 (VGPPGPPGPPGPPGPP) show a composition bias toward pro residues. A 3-hydroxyproline modification is found at proline 952. 4-hydroxyproline is present on proline 953. Proline 955 is subject to 3-hydroxyproline. At proline 956 the chain carries 4-hydroxyproline. At proline 958 the chain carries 3-hydroxyproline. 4-hydroxyproline occurs at positions 959, 962, and 965.

The protein belongs to the fibrillar collagen family. As to quaternary structure, trimers of one alpha 2(I) and two alpha 1(I) chains. In terms of processing, contains mostly 4-hydroxyproline. Proline residues at the third position of the tripeptide repeating unit (G-X-Y) are hydroxylated in some or all of the chains. Contains 3-hydroxyproline at a few sites. This modification occurs on the first proline residue in the sequence motif Gly-Pro-Hyp, where Hyp is 4-hydroxyproline. Post-translationally, lysine residues at the third position of the tripeptide repeating unit (G-X-Y) are 5-hydroxylated in some or all of the chains. In terms of processing, O-glycosylated on hydroxylated lysine residues. The O-linked glycan consists of a Glc-Gal disaccharide. Expressed in bones.

It is found in the secreted. The protein resides in the extracellular space. Its subcellular location is the extracellular matrix. Its function is as follows. Type I collagen is a member of group I collagen (fibrillar forming collagen). The chain is Collagen alpha-1(I) chain from Scelidotherium sp. (strain SLP-2019) (South American ground sloth).